Here is a 300-residue protein sequence, read N- to C-terminus: Epimerase family protein SACOL0834 (300 aa).

This sequence belongs to the NAD(P)-dependent epimerase/dehydratase family. SDR39U1 subfamily.

This Staphylococcus aureus (strain COL) protein is Epimerase family protein SACOL0834.